A 519-amino-acid polypeptide reads, in one-letter code: F-box only protein 31-A (519 aa).

Positions 11–37 (GQSGGCRRRQQRKGAGNDPELEDEEEE) are disordered. Residues 54–100 (PHSLLLLPPEILVEIFSLLPGTELGGLAQVCSKFRQILTTDTIWKRR) enclose the F-box domain. Positions 196, 204, 220, and 226 each coordinate Zn(2+). Residues 369-390 (REQRQTDNEEDDGRGAGPDKAE) show a composition bias toward basic and acidic residues. Positions 369 to 424 (REQRQTDNEEDDGRGAGPDKAEPAQQPAPLLRPPNEDANGADDDGDGGEQKPPNVQ) are disordered.

Belongs to the FBXO31 family. As to quaternary structure, part of a SCF (SKP1-cullin-F-box) protein ligase complex SCF(FBXO31).

The protein localises to the cytoplasm. Its pathway is protein modification; protein ubiquitination. Its function is as follows. Substrate-recognition component of the SCF(FBXO31) protein ligase complex, which specifically mediates the ubiquitination of proteins amidated at their C-terminus in response to oxidative stress, leading to their degradation by the proteasome. Fbxo31 specifically recognizes and binds C-terminal peptides bearing an amide: C-terminal amidation in response to oxidative stress takes place following protein fragmentation. The SCF(FBXO31) also plays a role in G1 arrest following DNA damage by mediating ubiquitination of phosphorylated cyclin-D1 (ccnd1), promoting its degradation by the proteasome, resulting in G1 arrest. The SCF(FBXO31) complex is however not a major regulator of ccnd1 stability during the G1/S transition. The protein is F-box only protein 31-A (fbxo31-a) of Xenopus laevis (African clawed frog).